The primary structure comprises 96 residues: MKTMPQIAIESNERLSLRVSTDAKKLIVRAAAIQQTNLTDFVVSNILPVAQKIVDAAERVYLTERDTKMIMEILDNPPAPNEKLLAAAFALPDMKK.

The segment at 61–96 (YLTERDTKMIMEILDNPPAPNEKLLAAAFALPDMKK) is neutralization domain.

It belongs to the TacA antitoxin family. In terms of assembly, forms a complex with cognate toxin TacT3. Forms a 4:2 antitoxin:toxin complex with cognate toxin TacT3. Forms a 4:4 antitoxin:toxin complex with promoter DNA, where 2 TacT3 dimers bridge 2 TacA3 dimers. Only TacA3 contacts promoter DNA.

In terms of biological role, antitoxin component of a type II toxin-antitoxin (TA) system. Counteracts the toxic effect of cognate toxin TacT3, but not TacT1 or TacT2. Plays a role in persister cell formation. The TacA3-TacT3 complex both represses and derepresses expression of its own operon. The hexameric 4:2 TacA3-TacT3 complex binds promoter DNA and represses its transcription; both subunits are required. The octomeric 4:4 TacA3-TacT3 complex derepresses the operon. The shift from hexameric to octomeric complex probably alters DNA-binding, leading to dissociation from the operator DNA and derepression. Does not bind the promoter of the TacA1-TacT1 operon. In Salmonella typhimurium (strain 14028s / SGSC 2262), this protein is Antitoxin TacA3.